A 542-amino-acid chain; its full sequence is Probable serine/threonine-protein kinase ndrB (542 aa).

Positions 1-52 are disordered; it reads MNVERKLESLSLQQQQQEEQQDESEQPNQGVEDEEEEEYDEEEYEEEEEDIN. A compositionally biased stretch (low complexity) spans 9 to 18; sequence SLSLQQQQQE. Over residues 19-51 the composition is skewed to acidic residues; the sequence is EQQDESEQPNQGVEDEEEEEYDEEEYEEEEEDI. The 308-residue stretch at 130 to 437 folds into the Protein kinase domain; that stretch reads FESIRIIGRG…VEEIQSHPFF (308 aa). ATP contacts are provided by residues 136-144 and K159; that span reads IGRGAFGEV. The Proton acceptor role is filled by D258. The region spanning 438–510 is the AGC-kinase C-terminal domain; it reads KGVDWRRLRE…RNFDAMRDAF (73 aa). The tract at residues 452–486 is disordered; sequence IIPQLSSPTDTSNFDHYEEEQQPEPMQPVQSKSRR. Polar residues predominate over residues 455-465; sequence QLSSPTDTSNF.

Belongs to the protein kinase superfamily. AGC Ser/Thr protein kinase family.

The protein resides in the cytoplasm. It carries out the reaction L-seryl-[protein] + ATP = O-phospho-L-seryl-[protein] + ADP + H(+). The catalysed reaction is L-threonyl-[protein] + ATP = O-phospho-L-threonyl-[protein] + ADP + H(+). The chain is Probable serine/threonine-protein kinase ndrB (ndrB) from Dictyostelium discoideum (Social amoeba).